The chain runs to 205 residues: MNEQLHNRTMAFAGILQAIAQVQHLARHGESDTDELAASLNTILVTNPESAADVYQDKAALHKGYKLVLNQLGDSSQKDVEITRYLVGILALERKLTRSNSGLAMLAERINQVNRQLHHFAITDEQVIANLASIYSDIISNLGPKIQISGNPLCLQRPIVQHKIRALLLAAMRSAVLWRQLGGKRRHLVFARKAIIDTAKKSLTL.

This sequence belongs to the HflD family.

Its subcellular location is the cytoplasm. It is found in the cell inner membrane. The chain is High frequency lysogenization protein HflD homolog from Shewanella sp. (strain MR-7).